A 159-amino-acid chain; its full sequence is Ribosomal RNA large subunit methyltransferase H (159 aa).

S-adenosyl-L-methionine contacts are provided by residues Leu76, Gly107, and 126 to 131 (LSSLTL).

The protein belongs to the RNA methyltransferase RlmH family. In terms of assembly, homodimer.

It localises to the cytoplasm. The enzyme catalyses pseudouridine(1915) in 23S rRNA + S-adenosyl-L-methionine = N(3)-methylpseudouridine(1915) in 23S rRNA + S-adenosyl-L-homocysteine + H(+). Specifically methylates the pseudouridine at position 1915 (m3Psi1915) in 23S rRNA. This Cupriavidus necator (strain ATCC 17699 / DSM 428 / KCTC 22496 / NCIMB 10442 / H16 / Stanier 337) (Ralstonia eutropha) protein is Ribosomal RNA large subunit methyltransferase H.